The sequence spans 218 residues: GCN5-related N-acetyltransferase 9 (218 aa).

The region spanning 36–183 (SALLEATGSE…KEVTLEYPVT (148 aa)) is the N-acetyltransferase domain. Acetyl-CoA is bound by residues 112–114 (MIA), 120–125 (GKGLGK), 152–154 (NTA), and Phe-159.

This sequence belongs to the acetyltransferase family. GNAT subfamily. In terms of assembly, oligomer. In terms of tissue distribution, expressed throughout the plant.

Its subcellular location is the cytoplasm. It localises to the nucleus. The enzyme catalyses an N-terminal L-alpha-aminoacyl-[protein] + acetyl-CoA = N-terminal N(alpha)-acetyl-L-alpha-aminoacyl-[protein] + CoA + H(+). It carries out the reaction L-lysyl-[protein] + acetyl-CoA = N(6)-acetyl-L-lysyl-[protein] + CoA + H(+). Functionally, probable protein acetyltransferase with dual specificity triggering both N-alpha-acetylation (NTA) and epsilon-lysine acetylation (KA). The sequence is that of GCN5-related N-acetyltransferase 9 from Arabidopsis thaliana (Mouse-ear cress).